The chain runs to 182 residues: Large ribosomal subunit protein uL16 (182 aa).

The protein belongs to the universal ribosomal protein uL16 family.

This Pyrobaculum neutrophilum (strain DSM 2338 / JCM 9278 / NBRC 100436 / V24Sta) (Thermoproteus neutrophilus) protein is Large ribosomal subunit protein uL16.